Consider the following 406-residue polypeptide: Cysteine desulfurase (406 aa).

An N6-(pyridoxal phosphate)lysine modification is found at Lys226. Catalysis depends on Cys364, which acts as the Cysteine persulfide intermediate.

The protein belongs to the class-V pyridoxal-phosphate-dependent aminotransferase family. Csd subfamily. As to quaternary structure, homodimer. Interacts with SufE and the SufBCD complex composed of SufB, SufC and SufD. The interaction with SufE is required to mediate the direct transfer of the sulfur atom from the S-sulfanylcysteine. Pyridoxal 5'-phosphate is required as a cofactor.

Its subcellular location is the cytoplasm. The catalysed reaction is (sulfur carrier)-H + L-cysteine = (sulfur carrier)-SH + L-alanine. It catalyses the reaction L-selenocysteine + AH2 = hydrogenselenide + L-alanine + A + H(+). Its pathway is cofactor biosynthesis; iron-sulfur cluster biosynthesis. In terms of biological role, cysteine desulfurases mobilize the sulfur from L-cysteine to yield L-alanine, an essential step in sulfur metabolism for biosynthesis of a variety of sulfur-containing biomolecules. Component of the suf operon, which is activated and required under specific conditions such as oxidative stress and iron limitation. Acts as a potent selenocysteine lyase in vitro, that mobilizes selenium from L-selenocysteine. Selenocysteine lyase activity is however unsure in vivo. The chain is Cysteine desulfurase from Klebsiella pneumoniae subsp. pneumoniae (strain ATCC 700721 / MGH 78578).